Here is a 473-residue protein sequence, read N- to C-terminus: MEGLLLLLPTAIIALYLYISLIRRSRKKHNLPPGSDGWPFLGETFSYLKPHSAISIGRFMEDHISRYGKIYRSNLFGEPTIVSADAELNRFVLQNEGRLFECSYPRSIGGILGKWSMLVLVGDMHRDMRMISLNFMSAARLRTRLMPEVERQTLLVLRSWREGSTFSAQEEAKKFTFNLMAKHIMSMDPGEPETEMLRREYITFMKGVVSAPLNFPGTPYWKALKSRSSILAVIERKMEERIGRRDRGDGGVEDDDLLGWAMNQSNLLKEQILDLLLSLLFAGHETSSMALALAIYFLESCPEAVRDLRDEHLAISMSGKEGECGLSWDQYKQMEFTHCVINESLRLGNVVRFVHRKAIQDVQYKGYDIPCGWKVLPVFAAVHLDSTLYSDPHRFNPWRWQSSSSKTTAANFMPYGGGLRLCTGSELAKLEMAVFLHHLVLNYQWKLAEPEQAFAYPFLDFPKGLQIKVRAIT.

Residues 2-22 (EGLLLLLPTAIIALYLYISLI) traverse the membrane as a helical segment. Cys422 is a heme binding site.

Belongs to the cytochrome P450 family. In terms of tissue distribution, mainly expressed in leaves and roots and, at low levels, in fruits and stems.

It localises to the membrane. The enzyme catalyses cholesterol + reduced [NADPH--hemoprotein reductase] + O2 = (22S)-22-hydroxycholesterol + oxidized [NADPH--hemoprotein reductase] + H2O + H(+). It functions in the pathway steroid metabolism; cholesterol metabolism. In terms of biological role, canonical brassinosteroid (BR)-biosynthetic enzyme capable of converting cholesterol to 22S-hydroxycholesterol via sterol-C22 hydroxylation. The polypeptide is Cholesterol 22-monohydroxylase CYP90B52 (Paris polyphylla (Daiswa polyphylla)).